We begin with the raw amino-acid sequence, 231 residues long: UPF0653 protein C607.02c (231 aa).

Disordered stretches follow at residues 1-33 (MPTK…VDDN), 47-68 (YHES…KKDY), 93-132 (SFKS…ENFE), and 147-178 (IESR…APPE). A compositionally biased stretch (basic and acidic residues) spans 9–27 (SVLEAERKKIGLDHAPKED). Basic residues-rich tracts occupy residues 53–67 (KEIK…KKKD) and 109–119 (EKKKIAKRKEK).

This sequence belongs to the UPF0653 family.

It is found in the nucleus. It localises to the nucleolus. This is UPF0653 protein C607.02c from Schizosaccharomyces pombe (strain 972 / ATCC 24843) (Fission yeast).